Here is a 311-residue protein sequence, read N- to C-terminus: Ribose-phosphate pyrophosphokinase (311 aa).

Residues 34 to 36 (DQE) and 93 to 94 (RQ) contribute to the ATP site. The Mg(2+) site is built by histidine 127 and aspartate 168. Residue lysine 191 is part of the active site. D-ribose 5-phosphate-binding positions include arginine 193, aspartate 217, and 221 to 225 (DSGGT).

The protein belongs to the ribose-phosphate pyrophosphokinase family. Class I subfamily. As to quaternary structure, homohexamer. Mg(2+) is required as a cofactor.

The protein resides in the cytoplasm. The catalysed reaction is D-ribose 5-phosphate + ATP = 5-phospho-alpha-D-ribose 1-diphosphate + AMP + H(+). It functions in the pathway metabolic intermediate biosynthesis; 5-phospho-alpha-D-ribose 1-diphosphate biosynthesis; 5-phospho-alpha-D-ribose 1-diphosphate from D-ribose 5-phosphate (route I): step 1/1. Functionally, involved in the biosynthesis of the central metabolite phospho-alpha-D-ribosyl-1-pyrophosphate (PRPP) via the transfer of pyrophosphoryl group from ATP to 1-hydroxyl of ribose-5-phosphate (Rib-5-P). This Mesorhizobium japonicum (strain LMG 29417 / CECT 9101 / MAFF 303099) (Mesorhizobium loti (strain MAFF 303099)) protein is Ribose-phosphate pyrophosphokinase.